The sequence spans 204 residues: Putative AgrB-like protein (204 aa).

Transmembrane regions (helical) follow at residues 52–74 (YGIA…YLWL), 87–107 (LNCT…FQNI), 111–131 (NWIV…FAPA), 151–168 (AMIG…IPFA), and 173–190 (LIMV…PLTY).

This sequence belongs to the AgrB family.

The protein resides in the cell membrane. Functionally, may be involved in the proteolytic processing of a quorum sensing system signal molecule precursor. This chain is Putative AgrB-like protein, found in Listeria monocytogenes serovar 1/2a (strain ATCC BAA-679 / EGD-e).